The primary structure comprises 345 residues: Holliday junction branch migration complex subunit RuvB (345 aa).

Residues 1–186 form a large ATPase domain (RuvB-L) region; sequence MSTDPDEREV…FGFTAHMDFY (186 aa). ATP-binding positions include Leu25, Arg26, Gly67, Lys70, Thr71, Ser72, 133–135, Arg176, Tyr186, and Arg223; that span reads EDF. Thr71 is a binding site for Mg(2+). Residues 187 to 257 form a small ATPAse domain (RuvB-S) region; sequence EPAELERVLV…VAKAALAVYD (71 aa). The tract at residues 260–345 is head domain (RuvB-H); sequence ELGLDRLDRA…AGANQPGLFE (86 aa). Arg315 and Arg320 together coordinate DNA.

Belongs to the RuvB family. Homohexamer. Forms an RuvA(8)-RuvB(12)-Holliday junction (HJ) complex. HJ DNA is sandwiched between 2 RuvA tetramers; dsDNA enters through RuvA and exits via RuvB. An RuvB hexamer assembles on each DNA strand where it exits the tetramer. Each RuvB hexamer is contacted by two RuvA subunits (via domain III) on 2 adjacent RuvB subunits; this complex drives branch migration. In the full resolvosome a probable DNA-RuvA(4)-RuvB(12)-RuvC(2) complex forms which resolves the HJ.

The protein resides in the cytoplasm. It carries out the reaction ATP + H2O = ADP + phosphate + H(+). The RuvA-RuvB-RuvC complex processes Holliday junction (HJ) DNA during genetic recombination and DNA repair, while the RuvA-RuvB complex plays an important role in the rescue of blocked DNA replication forks via replication fork reversal (RFR). RuvA specifically binds to HJ cruciform DNA, conferring on it an open structure. The RuvB hexamer acts as an ATP-dependent pump, pulling dsDNA into and through the RuvAB complex. RuvB forms 2 homohexamers on either side of HJ DNA bound by 1 or 2 RuvA tetramers; 4 subunits per hexamer contact DNA at a time. Coordinated motions by a converter formed by DNA-disengaged RuvB subunits stimulates ATP hydrolysis and nucleotide exchange. Immobilization of the converter enables RuvB to convert the ATP-contained energy into a lever motion, pulling 2 nucleotides of DNA out of the RuvA tetramer per ATP hydrolyzed, thus driving DNA branch migration. The RuvB motors rotate together with the DNA substrate, which together with the progressing nucleotide cycle form the mechanistic basis for DNA recombination by continuous HJ branch migration. Branch migration allows RuvC to scan DNA until it finds its consensus sequence, where it cleaves and resolves cruciform DNA. This chain is Holliday junction branch migration complex subunit RuvB, found in Mycobacterium marinum (strain ATCC BAA-535 / M).